The chain runs to 279 residues: Thymidylate synthase (279 aa).

Arg29 is a binding site for dUMP. His59 contributes to the (6R)-5,10-methylene-5,6,7,8-tetrahydrofolate binding site. A dUMP-binding site is contributed by 134 to 135 (RR). Cys154 serves as the catalytic Nucleophile. DUMP is bound by residues 181 to 184 (RSAD), Asn192, and 222 to 224 (HIY). A (6R)-5,10-methylene-5,6,7,8-tetrahydrofolate-binding site is contributed by Asp184. (6R)-5,10-methylene-5,6,7,8-tetrahydrofolate is bound at residue Ala278.

This sequence belongs to the thymidylate synthase family. Bacterial-type ThyA subfamily. As to quaternary structure, homodimer.

The protein localises to the cytoplasm. It catalyses the reaction dUMP + (6R)-5,10-methylene-5,6,7,8-tetrahydrofolate = 7,8-dihydrofolate + dTMP. Its pathway is pyrimidine metabolism; dTTP biosynthesis. Functionally, catalyzes the reductive methylation of 2'-deoxyuridine-5'-monophosphate (dUMP) to 2'-deoxythymidine-5'-monophosphate (dTMP) while utilizing 5,10-methylenetetrahydrofolate (mTHF) as the methyl donor and reductant in the reaction, yielding dihydrofolate (DHF) as a by-product. This enzymatic reaction provides an intracellular de novo source of dTMP, an essential precursor for DNA biosynthesis. The protein is Thymidylate synthase of Paracidovorax citrulli (strain AAC00-1) (Acidovorax citrulli).